Here is a 204-residue protein sequence, read N- to C-terminus: MGAYKYIEELWKKKQSDVMRFLQRVRCWEYRQLPGIVRITHPTRPDKARRLGYKAKQGYVVYRVRVRRGGRKRPVPKGIVYGKPKNQGITQLKFQRSLRSVAEERAGRKLGGLRVLNSYWINQDSTYKYYEVVLVDQAHTVIRNDPRINWICNAVHKHRELRGLTSAGKKYRGLRGRGHLYHKARPSKRATWKRNNTLSLRRYR.

It belongs to the eukaryotic ribosomal protein eL15 family.

This chain is Large ribosomal subunit protein eL15y (SB62), found in Picea mariana (Black spruce).